The following is a 492-amino-acid chain: Glutamyl-tRNA(Gln) amidotransferase subunit A (492 aa).

Catalysis depends on charge relay system residues Lys-79 and Ser-154. Ser-178 serves as the catalytic Acyl-ester intermediate.

This sequence belongs to the amidase family. GatA subfamily. Heterotrimer of A, B and C subunits.

It catalyses the reaction L-glutamyl-tRNA(Gln) + L-glutamine + ATP + H2O = L-glutaminyl-tRNA(Gln) + L-glutamate + ADP + phosphate + H(+). In terms of biological role, allows the formation of correctly charged Gln-tRNA(Gln) through the transamidation of misacylated Glu-tRNA(Gln) in organisms which lack glutaminyl-tRNA synthetase. The reaction takes place in the presence of glutamine and ATP through an activated gamma-phospho-Glu-tRNA(Gln). The polypeptide is Glutamyl-tRNA(Gln) amidotransferase subunit A (Acinetobacter baumannii (strain ACICU)).